The sequence spans 505 residues: Flagellin (505 aa).

The protein belongs to the bacterial flagellin family.

Its subcellular location is the secreted. It is found in the bacterial flagellum. In terms of biological role, flagellin is the subunit protein which polymerizes to form the filaments of bacterial flagella. The sequence is that of Flagellin (fliC) from Salmonella rostock.